A 261-amino-acid chain; its full sequence is MSESLHLTRNGSILEITLDRPKANAIDAKTSFEMGEVFLNFRDDPQLRVAIITGAGEKFFSAGWDLKAAAEGEAPDADFGPGGFAGLTEIFNLDKPVIAAVNGYAFGGGFELALAADFIVCADNASFALPEAKLGIVPDSGGVLRLPKILPPAIVNEMVMTGRRMGAEEALRWGIVNRVVSQAELMDNARELAQQLVNSAPLAIAALKEIYRTTSEMPVEEAYRYIRSGVLKHYPSVLHSEDAIEGPLAFAEKRDPVWKGR.

Glu-111 (nucleophile) is an active-site residue. Glu-131 acts as the Proton acceptor in catalysis.

This sequence belongs to the enoyl-CoA hydratase/isomerase family.

The enzyme catalyses (R)-carnitinyl-CoA = crotonobetainyl-CoA + H2O. Its pathway is amine and polyamine metabolism; carnitine metabolism. Catalyzes the reversible dehydration of L-carnitinyl-CoA to crotonobetainyl-CoA. The sequence is that of Carnitinyl-CoA dehydratase from Escherichia coli (strain ATCC 8739 / DSM 1576 / NBRC 3972 / NCIMB 8545 / WDCM 00012 / Crooks).